Here is a 306-residue protein sequence, read N- to C-terminus: Aspartate carbamoyltransferase catalytic subunit (306 aa).

Carbamoyl phosphate contacts are provided by arginine 56 and threonine 57. Lysine 84 provides a ligand contact to L-aspartate. Residues arginine 106, histidine 136, and glutamine 139 each coordinate carbamoyl phosphate. L-aspartate-binding residues include arginine 169 and arginine 221. 2 residues coordinate carbamoyl phosphate: alanine 262 and proline 263.

Belongs to the aspartate/ornithine carbamoyltransferase superfamily. ATCase family. In terms of assembly, heterododecamer (2C3:3R2) of six catalytic PyrB chains organized as two trimers (C3), and six regulatory PyrI chains organized as three dimers (R2).

The catalysed reaction is carbamoyl phosphate + L-aspartate = N-carbamoyl-L-aspartate + phosphate + H(+). It functions in the pathway pyrimidine metabolism; UMP biosynthesis via de novo pathway; (S)-dihydroorotate from bicarbonate: step 2/3. Catalyzes the condensation of carbamoyl phosphate and aspartate to form carbamoyl aspartate and inorganic phosphate, the committed step in the de novo pyrimidine nucleotide biosynthesis pathway. This chain is Aspartate carbamoyltransferase catalytic subunit, found in Streptococcus gordonii (strain Challis / ATCC 35105 / BCRC 15272 / CH1 / DL1 / V288).